The sequence spans 224 residues: Phosphoribosylformylglycinamidine synthase subunit PurQ (224 aa).

Residues 4 to 224 (RIGVITFPGT…YSALDSVLAS (221 aa)) form the Glutamine amidotransferase type-1 domain. Cys-87 acts as the Nucleophile in catalysis. Residues His-195 and Glu-197 contribute to the active site.

In terms of assembly, part of the FGAM synthase complex composed of 1 PurL, 1 PurQ and 2 PurS subunits.

Its subcellular location is the cytoplasm. It catalyses the reaction N(2)-formyl-N(1)-(5-phospho-beta-D-ribosyl)glycinamide + L-glutamine + ATP + H2O = 2-formamido-N(1)-(5-O-phospho-beta-D-ribosyl)acetamidine + L-glutamate + ADP + phosphate + H(+). The enzyme catalyses L-glutamine + H2O = L-glutamate + NH4(+). Its pathway is purine metabolism; IMP biosynthesis via de novo pathway; 5-amino-1-(5-phospho-D-ribosyl)imidazole from N(2)-formyl-N(1)-(5-phospho-D-ribosyl)glycinamide: step 1/2. Part of the phosphoribosylformylglycinamidine synthase complex involved in the purines biosynthetic pathway. Catalyzes the ATP-dependent conversion of formylglycinamide ribonucleotide (FGAR) and glutamine to yield formylglycinamidine ribonucleotide (FGAM) and glutamate. The FGAM synthase complex is composed of three subunits. PurQ produces an ammonia molecule by converting glutamine to glutamate. PurL transfers the ammonia molecule to FGAR to form FGAM in an ATP-dependent manner. PurS interacts with PurQ and PurL and is thought to assist in the transfer of the ammonia molecule from PurQ to PurL. The protein is Phosphoribosylformylglycinamidine synthase subunit PurQ of Mycobacterium leprae (strain TN).